Reading from the N-terminus, the 393-residue chain is Glucose-1-phosphate adenylyltransferase (393 aa).

Alpha-D-glucose 1-phosphate-binding positions include Tyr105, Gly170, 185–186, and Ser196; that span reads EK.

The protein belongs to the bacterial/plant glucose-1-phosphate adenylyltransferase family. As to quaternary structure, homotetramer.

The catalysed reaction is alpha-D-glucose 1-phosphate + ATP + H(+) = ADP-alpha-D-glucose + diphosphate. Its pathway is glycan biosynthesis; glycogen biosynthesis. Functionally, involved in the biosynthesis of ADP-glucose, a building block required for the elongation reactions to produce glycogen. Catalyzes the reaction between ATP and alpha-D-glucose 1-phosphate (G1P) to produce pyrophosphate and ADP-Glc. The protein is Glucose-1-phosphate adenylyltransferase of Clostridium perfringens (strain 13 / Type A).